The following is a 263-amino-acid chain: MAASAASGPSAQLAVRVIPCLDVAAGRVVKGVNFLDLQDAGDPVELARLYYEQGADELTFLDVTATVEDRSTMYDVVSATAEQVFIPLTVGGGVRSADDVARLLASGADKIGVNSAAIARPDLVGEIADRFGAQVCVLSLDITRGDTESGFVVTTHGGRTRTTIDAVAWAREAVERGAGELLVNSIDADGTRDGFDLELVAAMRAASRVPVIASGGAGELDHFAPAIEAGADAVLAASVFHSRRFTIGDVKGALADAGQVVRR.

Residues D22 and D141 contribute to the active site.

Belongs to the HisA/HisF family. As to quaternary structure, heterodimer of HisH and HisF.

It localises to the cytoplasm. The catalysed reaction is 5-[(5-phospho-1-deoxy-D-ribulos-1-ylimino)methylamino]-1-(5-phospho-beta-D-ribosyl)imidazole-4-carboxamide + L-glutamine = D-erythro-1-(imidazol-4-yl)glycerol 3-phosphate + 5-amino-1-(5-phospho-beta-D-ribosyl)imidazole-4-carboxamide + L-glutamate + H(+). It participates in amino-acid biosynthesis; L-histidine biosynthesis; L-histidine from 5-phospho-alpha-D-ribose 1-diphosphate: step 5/9. IGPS catalyzes the conversion of PRFAR and glutamine to IGP, AICAR and glutamate. The HisF subunit catalyzes the cyclization activity that produces IGP and AICAR from PRFAR using the ammonia provided by the HisH subunit. In Clavibacter michiganensis subsp. michiganensis (strain NCPPB 382), this protein is Imidazole glycerol phosphate synthase subunit HisF.